The primary structure comprises 483 residues: Probable zinc metalloprotease PTT_08196 (483 aa).

Residues 1–18 (MLFRSVILSNALLLPACA) form the signal peptide. N-linked (GlcNAc...) asparagine glycosylation is found at asparagine 96 and asparagine 121. Zn(2+)-binding residues include histidine 167, aspartate 187, and glutamate 220. An N-linked (GlcNAc...) asparagine glycan is attached at asparagine 235. Residue aspartate 247 coordinates Zn(2+). N-linked (GlcNAc...) asparagine glycans are attached at residues asparagine 310, asparagine 362, asparagine 401, asparagine 411, and asparagine 421. The region spanning 396–483 (PAMPRNVTID…KSPAVYPFPA (88 aa)) is the Fibronectin type-III domain.

The protein belongs to the peptidase M28 family. M28B subfamily. Requires Zn(2+) as cofactor.

The protein resides in the secreted. The sequence is that of Probable zinc metalloprotease PTT_08196 from Pyrenophora teres f. teres (strain 0-1) (Barley net blotch fungus).